The sequence spans 130 residues: Protein ApaG (130 aa).

An ApaG domain is found at lysine 3–arginine 127.

The polypeptide is Protein ApaG (Methylorubrum populi (strain ATCC BAA-705 / NCIMB 13946 / BJ001) (Methylobacterium populi)).